Consider the following 106-residue polypeptide: Large ribosomal subunit protein bL21 (106 aa).

Belongs to the bacterial ribosomal protein bL21 family. As to quaternary structure, part of the 50S ribosomal subunit. Contacts protein L20.

In terms of biological role, this protein binds to 23S rRNA in the presence of protein L20. This chain is Large ribosomal subunit protein bL21, found in Xylella fastidiosa (strain 9a5c).